A 456-amino-acid chain; its full sequence is GTPase Der (456 aa).

2 EngA-type G domains span residues 4 to 169 (PIVA…PAVE) and 177 to 352 (IKVA…ESHK). Residues 10-17 (GRPNVGKS), 57-61 (DTGGL), 120-123 (NKCE), 183-190 (GRPNVGKS), 230-234 (DTAGI), and 295-298 (NKWD) contribute to the GTP site. Residues 353–438 (RRVSTSVINE…PIILLWRSKK (86 aa)) form the KH-like domain.

Belongs to the TRAFAC class TrmE-Era-EngA-EngB-Septin-like GTPase superfamily. EngA (Der) GTPase family. As to quaternary structure, associates with the 50S ribosomal subunit.

GTPase that plays an essential role in the late steps of ribosome biogenesis. This is GTPase Der from Nostoc punctiforme (strain ATCC 29133 / PCC 73102).